Reading from the N-terminus, the 252-residue chain is Adenosine 5'-phosphosulfate reductase (252 aa).

4 residues coordinate [4Fe-4S] cluster: cysteine 125, cysteine 126, cysteine 208, and cysteine 211. Residues aspartate 219–serine 252 are disordered. Basic and acidic residues predominate over residues tyrosine 221–cysteine 235. Residue cysteine 235 is the Nucleophile; cysteine thiosulfonate intermediate of the active site.

This sequence belongs to the PAPS reductase family. CysH subfamily. The cofactor is [4Fe-4S] cluster.

The protein resides in the cytoplasm. The enzyme catalyses [thioredoxin]-disulfide + sulfite + AMP + 2 H(+) = adenosine 5'-phosphosulfate + [thioredoxin]-dithiol. Its pathway is sulfur metabolism; hydrogen sulfide biosynthesis; sulfite from sulfate. Catalyzes the formation of sulfite from adenosine 5'-phosphosulfate (APS) using thioredoxin as an electron donor. The protein is Adenosine 5'-phosphosulfate reductase of Salinibacter ruber (strain DSM 13855 / M31).